The chain runs to 362 residues: N-alpha-acetyltransferase 30 (362 aa).

Residues 1-20 (MAEVPPGPSSLLPPPAPPAP) are compositionally biased toward pro residues. Disordered regions lie at residues 1-26 (MAEV…VEPR), 38-88 (CSED…NGLI), and 113-182 (ATTA…EEDE). Phosphoserine is present on residues Ser39 and Ser55. Acidic residues predominate over residues 39 to 48 (SEDEEDDEEH). Thr117 carries the post-translational modification Phosphothreonine. Low complexity predominate over residues 149–165 (AVPSPVEAAAASDPAAA). Ser152 carries the post-translational modification Phosphoserine. Positions 173-182 (TEQEEEEEDE) are enriched in acidic residues. 3 positions are modified to phosphoserine: Ser190, Ser196, and Ser199. In terms of domain architecture, N-acetyltransferase spans 214-362 (RYVRYESELQ…DALRLKLWLR (149 aa)). Lys233 is modified (N6-acetyllysine).

Belongs to the acetyltransferase family. MAK3 subfamily. As to quaternary structure, component of the N-terminal acetyltransferase C (NatC) complex, which is composed of NAA35, NAA38 and NAA30.

It is found in the cytoplasm. It localises to the nucleus. It catalyses the reaction N-terminal L-methionyl-L-leucyl-[protein] + acetyl-CoA = N-terminal N(alpha)-acetyl-L-methionyl-L-leucyl-[protein] + CoA + H(+). The enzyme catalyses N-terminal L-methionyl-L-isoleucyl-[protein] + acetyl-CoA = N-terminal N(alpha)-acetyl-L-methionyl-L-isoleucyl-[protein] + CoA + H(+). It carries out the reaction N-terminal L-methionyl-L-phenylalanyl-[protein] + acetyl-CoA = N-terminal N(alpha)-acetyl-L-methionyl-L-phenylalanyl-[protein] + CoA + H(+). The catalysed reaction is N-terminal L-methionyl-L-tryptophyl-[protein] + acetyl-CoA = N-terminal N(alpha)-acetyl-L-methionyl-L-tryptophyl-[protein] + CoA + H(+). It catalyses the reaction N-terminal L-methionyl-L-tyrosyl-[protein] + acetyl-CoA = N-terminal N(alpha)-acetyl-L-methionyl-L-tyrosyl-[protein] + CoA + H(+). In terms of biological role, catalytic subunit of the N-terminal acetyltransferase C (NatC) complex. Catalyzes acetylation of the N-terminal methionine residues of peptides beginning with Met-Leu-Ala and Met-Leu-Gly. N-terminal acetylation protects proteins from ubiquitination and degradation by the N-end rule pathway. Necessary for the lysosomal localization and function of ARL8B sugeesting that ARL8B is a NatC substrate. The protein is N-alpha-acetyltransferase 30 (NAA30) of Homo sapiens (Human).